Here is a 193-residue protein sequence, read N- to C-terminus: Holliday junction branch migration complex subunit RuvA (193 aa).

The tract at residues 1-64 (MIGRIAGILL…EDAHLLYGFL (64 aa)) is domain I. Residues 65–139 (TQQERTTFRE…GKLGADLGAL (75 aa)) form a domain II region. The segment at 139 to 143 (LAGAA) is flexible linker. The domain III stretch occupies residues 144-193 (SPSDHATDILNALLALGYSEKEGLAAIKNVPAGTGVSEGIKLALKALSKA).

This sequence belongs to the RuvA family. Homotetramer. Forms an RuvA(8)-RuvB(12)-Holliday junction (HJ) complex. HJ DNA is sandwiched between 2 RuvA tetramers; dsDNA enters through RuvA and exits via RuvB. An RuvB hexamer assembles on each DNA strand where it exits the tetramer. Each RuvB hexamer is contacted by two RuvA subunits (via domain III) on 2 adjacent RuvB subunits; this complex drives branch migration. In the full resolvosome a probable DNA-RuvA(4)-RuvB(12)-RuvC(2) complex forms which resolves the HJ.

The protein localises to the cytoplasm. The RuvA-RuvB-RuvC complex processes Holliday junction (HJ) DNA during genetic recombination and DNA repair, while the RuvA-RuvB complex plays an important role in the rescue of blocked DNA replication forks via replication fork reversal (RFR). RuvA specifically binds to HJ cruciform DNA, conferring on it an open structure. The RuvB hexamer acts as an ATP-dependent pump, pulling dsDNA into and through the RuvAB complex. HJ branch migration allows RuvC to scan DNA until it finds its consensus sequence, where it cleaves and resolves the cruciform DNA. The sequence is that of Holliday junction branch migration complex subunit RuvA from Burkholderia cenocepacia (strain ATCC BAA-245 / DSM 16553 / LMG 16656 / NCTC 13227 / J2315 / CF5610) (Burkholderia cepacia (strain J2315)).